The following is an 83-amino-acid chain: Cell division topological specificity factor (83 aa).

The protein belongs to the MinE family.

Its function is as follows. Prevents the cell division inhibition by proteins MinC and MinD at internal division sites while permitting inhibition at polar sites. This ensures cell division at the proper site by restricting the formation of a division septum at the midpoint of the long axis of the cell. The protein is Cell division topological specificity factor of Deinococcus deserti (strain DSM 17065 / CIP 109153 / LMG 22923 / VCD115).